A 318-amino-acid chain; its full sequence is Mevalonate 3-kinase (318 aa).

Leu-19 lines the substrate pocket. Residues 96-100 and 105-108 contribute to the ATP site; these read YSSQN and SGSS. Residues Glu-140 and Arg-144 each contribute to the substrate site. 2 residues coordinate ATP: Arg-185 and Ser-188.

It belongs to the GHMP kinase family. As to quaternary structure, homodimer.

It catalyses the reaction (R)-mevalonate + ATP = (R)-3-phosphomevalonate + ADP + H(+). It participates in isoprenoid biosynthesis; isopentenyl diphosphate biosynthesis via mevalonate pathway. Its function is as follows. Catalyzes the phosphorylation of mevalonate (MVA) to yield mevalonate-3-phosphate. Functions in an alternative mevalonate pathway, only present in extreme acidophiles of the Thermoplasmatales order, which passes through mevalonate 3-phosphate rather than mevalonate 5-phosphate. In Thermoplasma acidophilum (strain ATCC 25905 / DSM 1728 / JCM 9062 / NBRC 15155 / AMRC-C165), this protein is Mevalonate 3-kinase.